A 386-amino-acid polypeptide reads, in one-letter code: Protein DOM34 (386 aa).

This sequence belongs to the eukaryotic release factor 1 family. Pelota subfamily. In terms of assembly, monomer. Component of the Dom34-Hbs1 complex, also named Pelota-HBS1L complex, composed of DOM34 and HBS1. Requires a divalent metal cation as cofactor.

Its subcellular location is the cytoplasm. In terms of biological role, component of the Dom34-Hbs1 complex, a complex that recognizes stalled ribosomes and triggers the No-Go Decay (NGD) pathway. In the Dom34-Hbs1 complex, DOM34 recognizes ribosomes stalled at the 3' end of an mRNA and engages stalled ribosomes by destabilizing mRNA in the mRNA channel. Following ribosome-binding, the Dom34-Hbs1 complex promotes the disassembly of stalled ribosomes, followed by degradation of damaged mRNAs as part of the NGD pathway. The Dom34-Hbs1 complex is also involved in non-functional rRNA decay. In Saccharomyces cerevisiae (strain ATCC 204508 / S288c) (Baker's yeast), this protein is Protein DOM34.